Here is a 258-residue protein sequence, read N- to C-terminus: Transcription factor TT2 (258 aa).

HTH myb-type domains are found at residues 11 to 63 (REEL…KNYL) and 64 to 118 (RPGI…RKRL). 2 DNA-binding regions (H-T-H motif) span residues 39–63 (WSTL…KNYL) and 91–114 (WSLI…NSNL). An ATP-binding site is contributed by 47–54 (GLKRCGKS).

In terms of assembly, interacts with BHLH2/EGL3/MYC146, BHLH12/MYC1 and BHLH42/TT8. As to expression, expressed at a high level in immature siliques and at a lower level in flowers. Undetected in young seedlings, roots, leaves and inflorescence stems.

It is found in the nucleus. Functionally, transcription activator, when associated with BHLH2/EGL3/MYC146, BHLH12/MYC1, or BHLH42/TT8. Involved in the control of flavonoid late metabolism in developing siliques. Plays a key role in determining the tissue-specific activation of leucoanthocyanidin reductase (BANYULS). The sequence is that of Transcription factor TT2 (TT2) from Arabidopsis thaliana (Mouse-ear cress).